We begin with the raw amino-acid sequence, 1522 residues long: Lysophospholipase NTE1 (1522 aa).

At 1-73 (MVDGTYVNSS…SLLVYLINGT (73 aa)) the chain is on the lumenal side. The helical transmembrane segment at 74 to 94 (VPFYLVVLGSVFTPIIVYLIL) threads the bilayer. Residues 95 to 1522 (RSRVLSAYSR…IHLLHRRNSI (1428 aa)) are Cytoplasmic-facing. 3 disordered regions span residues 443-468 (SVQE…TPNK), 485-523 (DLLS…ASSP), and 535-556 (SQNF…PSVV). 2 stretches are compositionally biased toward low complexity: residues 498–511 (KTAS…PRIS) and 540–555 (PLSS…KPSV). A nucleoside 3',5'-cyclic phosphate is bound by residues 661 to 782 (PINV…LTKL) and 778 to 918 (TLTK…VAHK). Disordered stretches follow at residues 828–852 (QKSK…DNQP) and 1125–1145 (SSQN…GAPP). Positions 1219–1383 (LVLGGGGARG…LDNLPVLEMK (165 aa)) constitute a PNPLA domain. A GXGXXG motif is present at residues 1223–1228 (GGGARG). Residues 1250-1254 (GTSIG) carry the GXSXG motif. Ser-1252 serves as the catalytic Nucleophile. Asp-1370 functions as the Proton acceptor in the catalytic mechanism. A DGA/G motif is present at residues 1370–1372 (DGG).

The protein belongs to the NTE family.

It localises to the endoplasmic reticulum membrane. It carries out the reaction a 1-acyl-sn-glycero-3-phosphocholine + H2O = sn-glycerol 3-phosphocholine + a fatty acid + H(+). With respect to regulation, inhibited by organophosphorus esters. Its function is as follows. Intracellular phospholipase B that catalyzes the double deacylation of phosphatidylcholine (PC) to glycerophosphocholine (GroPCho). Plays an important role in membrane lipid homeostasis. Responsible for the rapid PC turnover in response to inositol, elevated temperatures, or when choline is present in the growth medium. This chain is Lysophospholipase NTE1 (NTE1), found in Eremothecium gossypii (strain ATCC 10895 / CBS 109.51 / FGSC 9923 / NRRL Y-1056) (Yeast).